A 408-amino-acid chain; its full sequence is CinA-like protein (408 aa).

The protein belongs to the CinA family.

The polypeptide is CinA-like protein (Fervidobacterium nodosum (strain ATCC 35602 / DSM 5306 / Rt17-B1)).